We begin with the raw amino-acid sequence, 176 residues long: ATP synthase subunit delta (176 aa).

Belongs to the ATPase delta chain family. In terms of assembly, F-type ATPases have 2 components, F(1) - the catalytic core - and F(0) - the membrane proton channel. F(1) has five subunits: alpha(3), beta(3), gamma(1), delta(1), epsilon(1). F(0) has three main subunits: a(1), b(2) and c(10-14). The alpha and beta chains form an alternating ring which encloses part of the gamma chain. F(1) is attached to F(0) by a central stalk formed by the gamma and epsilon chains, while a peripheral stalk is formed by the delta and b chains.

The protein localises to the cell inner membrane. In terms of biological role, f(1)F(0) ATP synthase produces ATP from ADP in the presence of a proton or sodium gradient. F-type ATPases consist of two structural domains, F(1) containing the extramembraneous catalytic core and F(0) containing the membrane proton channel, linked together by a central stalk and a peripheral stalk. During catalysis, ATP synthesis in the catalytic domain of F(1) is coupled via a rotary mechanism of the central stalk subunits to proton translocation. This protein is part of the stalk that links CF(0) to CF(1). It either transmits conformational changes from CF(0) to CF(1) or is implicated in proton conduction. The chain is ATP synthase subunit delta from Aliarcobacter butzleri (strain RM4018) (Arcobacter butzleri).